A 225-amino-acid chain; its full sequence is 2-phytyl-1,4-naphtoquinone methyltransferase (225 aa).

It belongs to the class I-like SAM-binding methyltransferase superfamily. MenG/UbiE family.

The enzyme catalyses demethylphylloquinol + S-adenosyl-L-methionine = phylloquinol + S-adenosyl-L-homocysteine + H(+). Its pathway is cofactor biosynthesis; phylloquinone biosynthesis. Its function is as follows. Methyltransferase required for the conversion of 2-phytyl-1,4-beta-naphthoquinol to phylloquinol. In Thermosynechococcus vestitus (strain NIES-2133 / IAM M-273 / BP-1), this protein is 2-phytyl-1,4-naphtoquinone methyltransferase.